The following is a 402-amino-acid chain: Deoxyguanosinetriphosphate triphosphohydrolase-like protein 2 (402 aa).

Residues 72-215 form the HD domain; that stretch reads RLTHSLEVAQ…MDLADEIAYA (144 aa).

This sequence belongs to the dGTPase family. Type 2 subfamily.

The polypeptide is Deoxyguanosinetriphosphate triphosphohydrolase-like protein 2 (Vibrio cholerae serotype O1 (strain ATCC 39315 / El Tor Inaba N16961)).